The following is an 84-amino-acid chain: MENNEIQSVLMNALSLQEVHVSGDGSHFQVIAVGELFDGMSRVKKQQTVYGPLMEYIADNRIHAVSIKAYTPAEWARDRKLNGF.

This sequence belongs to the BolA/IbaG family.

Its function is as follows. Involved in cell resistance against acid stress. This Escherichia coli O6:H1 (strain CFT073 / ATCC 700928 / UPEC) protein is Acid stress protein IbaG.